Consider the following 432-residue polypeptide: Glutamate-1-semialdehyde 2,1-aminomutase (432 aa).

Lys272 is subject to N6-(pyridoxal phosphate)lysine.

Belongs to the class-III pyridoxal-phosphate-dependent aminotransferase family. HemL subfamily. Homodimer. Pyridoxal 5'-phosphate is required as a cofactor.

It is found in the cytoplasm. It catalyses the reaction (S)-4-amino-5-oxopentanoate = 5-aminolevulinate. It participates in porphyrin-containing compound metabolism; protoporphyrin-IX biosynthesis; 5-aminolevulinate from L-glutamyl-tRNA(Glu): step 2/2. The protein operates within porphyrin-containing compound metabolism; chlorophyll biosynthesis. The chain is Glutamate-1-semialdehyde 2,1-aminomutase from Trichodesmium erythraeum (strain IMS101).